We begin with the raw amino-acid sequence, 84 residues long: Cytochrome b559 subunit alpha (84 aa).

A helical membrane pass occupies residues 22–36 (IIHSITIPALFVAGW). A heme-binding site is contributed by His-24.

This sequence belongs to the PsbE/PsbF family. As to quaternary structure, heterodimer of an alpha subunit and a beta subunit. PSII is composed of 1 copy each of membrane proteins PsbA, PsbB, PsbC, PsbD, PsbE, PsbF, PsbH, PsbI, PsbJ, PsbK, PsbL, PsbM, PsbT, PsbX, PsbY, PsbZ, Psb30/Ycf12, at least 3 peripheral proteins of the oxygen-evolving complex and a large number of cofactors. It forms dimeric complexes. Heme b serves as cofactor.

The protein localises to the plastid. It localises to the chloroplast thylakoid membrane. Its function is as follows. This b-type cytochrome is tightly associated with the reaction center of photosystem II (PSII). PSII is a light-driven water:plastoquinone oxidoreductase that uses light energy to abstract electrons from H(2)O, generating O(2) and a proton gradient subsequently used for ATP formation. It consists of a core antenna complex that captures photons, and an electron transfer chain that converts photonic excitation into a charge separation. The protein is Cytochrome b559 subunit alpha of Guillardia theta (Cryptophyte).